A 361-amino-acid polypeptide reads, in one-letter code: MLLWLTNFLSQHFHAFRVFNYLTFRSIVSALTALILVLSLSPRLIKYLVSLQVGQMVRNDGPQTHLKKSGTPTMGGVLIIVAIVISVLLWGDLSNRFIWVILLVTVAFSAIGWMDDYRKIIRKNSKGLSARSKYLLQSIIGALAAVYLYFSATTGAETALVIPFLKNVLPNLGLFYIVLAYFVIVGSSNAVNLTDGLDGLALMPTVMIGAALGVFAYTTGNHFFAQYLAIPYIPGAGEVVVFCSALVGAGLGFLWYNTYPAQVFMGDVGSLGLGAALGVTAVVVRQELVYFLMGGIFVAETLSVILQVGYFKLSGGKRIFRMAPLHHHFELKGWPEPKVIVRFWIITFILVLCGLATLKLR.

The next 10 helical transmembrane spans lie at 18 to 38 (VFNY…ILVL), 73 to 93 (TMGG…WGDL), 97 to 117 (FIWV…MDDY), 135 to 155 (LLQS…ATTG), 168 to 188 (VLPN…VGSS), 196 to 216 (GLDG…GVFA), 235 to 255 (GAGE…GFLW), 263 to 283 (VFMG…TAVV), 288 to 308 (LVYF…ILQV), and 338 to 358 (KVIV…LATL).

It belongs to the glycosyltransferase 4 family. MraY subfamily. Mg(2+) serves as cofactor.

Its subcellular location is the cell inner membrane. The enzyme catalyses UDP-N-acetyl-alpha-D-muramoyl-L-alanyl-gamma-D-glutamyl-meso-2,6-diaminopimeloyl-D-alanyl-D-alanine + di-trans,octa-cis-undecaprenyl phosphate = di-trans,octa-cis-undecaprenyl diphospho-N-acetyl-alpha-D-muramoyl-L-alanyl-D-glutamyl-meso-2,6-diaminopimeloyl-D-alanyl-D-alanine + UMP. It functions in the pathway cell wall biogenesis; peptidoglycan biosynthesis. Functionally, catalyzes the initial step of the lipid cycle reactions in the biosynthesis of the cell wall peptidoglycan: transfers peptidoglycan precursor phospho-MurNAc-pentapeptide from UDP-MurNAc-pentapeptide onto the lipid carrier undecaprenyl phosphate, yielding undecaprenyl-pyrophosphoryl-MurNAc-pentapeptide, known as lipid I. The sequence is that of Phospho-N-acetylmuramoyl-pentapeptide-transferase from Coxiella burnetii (strain CbuK_Q154) (Coxiella burnetii (strain Q154)).